Here is a 455-residue protein sequence, read N- to C-terminus: Homeobox protein 14 (455 aa).

5 stretches are compositionally biased toward low complexity: residues 1–16 (MNHN…KNNS), 24–39 (SSRS…SSSG), 81–118 (TTTT…ESPN), 179–239 (ESPN…SPSF), and 263–294 (NNNN…TNNN). 4 disordered regions span residues 1-53 (MNHN…SSIN), 67-121 (KQTK…NCNK), 178-239 (SESP…SPSF), and 258-296 (TLLS…NNGD). 2 DNA-binding regions (homeobox) span residues 310–369 (KSGQ…SKSG) and 372–431 (SYAK…NKLS). The tract at residues 431 to 455 (SSKANQDNDNNNNNENNDDSYSDEG) is disordered. The segment covering 435–445 (NQDNDNNNNNE) has biased composition (low complexity). Over residues 446–455 (NNDDSYSDEG) the composition is skewed to acidic residues.

Its subcellular location is the nucleus. Functionally, putative transcription factor. This is Homeobox protein 14 (hbx14) from Dictyostelium discoideum (Social amoeba).